We begin with the raw amino-acid sequence, 408 residues long: ATP phosphoribosyltransferase regulatory subunit (408 aa).

It belongs to the class-II aminoacyl-tRNA synthetase family. HisZ subfamily. In terms of assembly, heteromultimer composed of HisG and HisZ subunits.

The protein resides in the cytoplasm. Its pathway is amino-acid biosynthesis; L-histidine biosynthesis; L-histidine from 5-phospho-alpha-D-ribose 1-diphosphate: step 1/9. Functionally, required for the first step of histidine biosynthesis. May allow the feedback regulation of ATP phosphoribosyltransferase activity by histidine. In Gloeothece citriformis (strain PCC 7424) (Cyanothece sp. (strain PCC 7424)), this protein is ATP phosphoribosyltransferase regulatory subunit.